We begin with the raw amino-acid sequence, 269 residues long: Phosphate import ATP-binding protein PstB (269 aa).

An ABC transporter domain is found at 23-264 (IATRNLEFYY…PSKQQTEDYI (242 aa)). ATP is bound at residue 55-62 (GPSGCGKS).

The protein belongs to the ABC transporter superfamily. Phosphate importer (TC 3.A.1.7) family. In terms of assembly, the complex is composed of two ATP-binding proteins (PstB), two transmembrane proteins (PstC and PstA) and a solute-binding protein (PstS).

The protein localises to the cell inner membrane. It carries out the reaction phosphate(out) + ATP + H2O = ADP + 2 phosphate(in) + H(+). Functionally, part of the ABC transporter complex PstSACB involved in phosphate import. Responsible for energy coupling to the transport system. The sequence is that of Phosphate import ATP-binding protein PstB from Xylella fastidiosa (strain Temecula1 / ATCC 700964).